The primary structure comprises 290 residues: GTPase Era (290 aa).

One can recognise an Era-type G domain in the interval 2-169; that stretch reads KSGFVSIIGR…KDKIYANLQE (168 aa). Positions 10-17 are G1; it reads GRPSTGKS. 10 to 17 is a GTP binding site; it reads GRPSTGKS. Residues 36 to 40 are G2; that stretch reads QTTRN. The G3 stretch occupies residues 57–60; that stretch reads DTPG. GTP-binding positions include 57 to 61 and 119 to 122; these read DTPGF and NKID. Residues 119–122 form a G4 region; it reads NKID. The G5 stretch occupies residues 148 to 150; the sequence is ISA. The 77-residue stretch at 200-276 folds into the KH type-2 domain; that stretch reads LKEELPYSLY…DLFLQVKLRK (77 aa).

It belongs to the TRAFAC class TrmE-Era-EngA-EngB-Septin-like GTPase superfamily. Era GTPase family. Monomer.

The protein localises to the cytoplasm. The protein resides in the cell inner membrane. In terms of biological role, an essential GTPase that binds both GDP and GTP, with rapid nucleotide exchange. Plays a role in 16S rRNA processing and 30S ribosomal subunit biogenesis and possibly also in cell cycle regulation and energy metabolism. This chain is GTPase Era, found in Borrelia hermsii (strain HS1 / DAH).